The sequence spans 449 residues: Lysine-sensitive aspartokinase 3 (449 aa).

Residues 2-245 (SEIVVSKFGG…AAKRIDEIAF (244 aa)) form an aspartokinase region. 8-11 (KFGG) is an ATP binding site. Substrate is bound by residues Thr45, Glu119, and 198 to 201 (RGGS). Residues 221–222 (TD), Tyr227, Arg232, and 257–258 (KV) each bind ATP. The tract at residues 246-449 (AEAAEMATFG…VQKLHSNLFE (204 aa)) is interface. The segment at 299 to 449 (FRALALRRNQ…VQKLHSNLFE (151 aa)) is required for homodimerization. One can recognise an ACT domain in the interval 313-394 (LHSLNMLHSR…GLALVALIGN (82 aa)). Residues Met318, Ser321, 324-325 (FL), 338-340 (SVD), and 345-346 (SE) contribute to the L-lysine site.

The protein belongs to the aspartokinase family. As to quaternary structure, homodimer. In the inactive form a homotetramer is formed.

The catalysed reaction is L-aspartate + ATP = 4-phospho-L-aspartate + ADP. Its pathway is amino-acid biosynthesis; L-lysine biosynthesis via DAP pathway; (S)-tetrahydrodipicolinate from L-aspartate: step 1/4. Its activity is regulated as follows. Synthesis and activity are sensitive to the allosteric inhibitor lysine, one of the end metabolites of the aspartic acid family branched pathway. The protein is Lysine-sensitive aspartokinase 3 (lysC) of Escherichia coli (strain K12).